A 369-amino-acid polypeptide reads, in one-letter code: Phosphoribosyl pyrophosphate synthase-associated protein 2 (369 aa).

M1 is subject to N-acetylmethionine. Phosphoserine is present on residues S219, S227, and S233.

Belongs to the ribose-phosphate pyrophosphokinase family. As to quaternary structure, binds to PRPS1 and PRPS2.

Seems to play a negative regulatory role in 5-phosphoribose 1-diphosphate synthesis. The protein is Phosphoribosyl pyrophosphate synthase-associated protein 2 (PRPSAP2) of Bos taurus (Bovine).